The chain runs to 397 residues: Serpin B10 (397 aa).

The Nuclear localization signal signature appears at 74–77 (KKRK).

This sequence belongs to the serpin family. Ov-serpin subfamily.

The protein resides in the nucleus. The protein localises to the cytoplasm. In terms of biological role, protease inhibitor that may play a role in the regulation of protease activities during hematopoiesis and apoptosis induced by TNF. May regulate protease activities in the cytoplasm and in the nucleus. The polypeptide is Serpin B10 (Serpinb10) (Mus musculus (Mouse)).